The following is a 406-amino-acid chain: Elongation factor Tu (406 aa).

In terms of domain architecture, tr-type G spans 10 to 215 (KPHVNVGTIG…AIDEYIPTPV (206 aa)). The tract at residues 19-26 (GHVDHGKT) is G1. 19-26 (GHVDHGKT) provides a ligand contact to GTP. Position 26 (Thr-26) interacts with Mg(2+). A G2 region spans residues 61-65 (GITIN). The G3 stretch occupies residues 82–85 (DCPG). GTP contacts are provided by residues 82–86 (DCPGH) and 137–140 (NKVD). A G4 region spans residues 137 to 140 (NKVD). The G5 stretch occupies residues 175–177 (SAL).

It belongs to the TRAFAC class translation factor GTPase superfamily. Classic translation factor GTPase family. EF-Tu/EF-1A subfamily. In terms of assembly, monomer.

It localises to the cytoplasm. It carries out the reaction GTP + H2O = GDP + phosphate + H(+). Functionally, GTP hydrolase that promotes the GTP-dependent binding of aminoacyl-tRNA to the A-site of ribosomes during protein biosynthesis. In Thermus aquaticus, this protein is Elongation factor Tu.